Reading from the N-terminus, the 248-residue chain is MDQRQRRILGQPLSIPTSQPKQKRTSMISFFSKVSWKLRFQKREPLKNVFFILAERARDPSAKKRHMAMRNLGTMAYEAPDKVRKYKKIVLDLLVYGLYDPVNLEVIHESMKTLTVVLGKIQGKGLGSFFIDITLQTRTLLDDENDSLRYSAFVLFGQLAAFAGRKWKKFFTSQVKQTRDSLLIHLQDRNPQVAKACKTTFQACSPYLKLKEEYSFQSEEDQRNTKLYQQLSHYHPEILQFFYANKIL.

The tract at residues 1 to 21 (MDQRQRRILGQPLSIPTSQPK) is disordered. An HEAT repeat occupies 128–163 (SFFIDITLQTRTLLDDENDSLRYSAFVLFGQLAAFA).

In terms of tissue distribution, ubiquitous.

It is found in the nucleus. Its subcellular location is the nucleolus. This chain is Protein maestro (MRO), found in Homo sapiens (Human).